A 176-amino-acid polypeptide reads, in one-letter code: Translation initiation factor IF-3 (176 aa).

It belongs to the IF-3 family. Monomer.

It is found in the cytoplasm. Functionally, IF-3 binds to the 30S ribosomal subunit and shifts the equilibrium between 70S ribosomes and their 50S and 30S subunits in favor of the free subunits, thus enhancing the availability of 30S subunits on which protein synthesis initiation begins. This Streptococcus thermophilus (strain ATCC BAA-491 / LMD-9) protein is Translation initiation factor IF-3.